The chain runs to 367 residues: FAD synthetase 2, chloroplastic (367 aa).

The N-terminal 57 residues, 1–57 (MLCGGSRVLQHLSDHNHHNSIGLGLGFCGAKIVQLSSFFLRPSQAMAKSHHFSRKLR), are a transit peptide targeting the chloroplast.

Mg(2+) serves as cofactor.

It is found in the plastid. Its subcellular location is the chloroplast. It catalyses the reaction FMN + ATP + H(+) = FAD + diphosphate. It participates in cofactor biosynthesis; FAD biosynthesis; FAD from FMN: step 1/1. Its function is as follows. Catalyzes the adenylation of flavin mononucleotide (FMN) to form flavin adenine dinucleotide (FAD) coenzyme. This is FAD synthetase 2, chloroplastic from Arabidopsis thaliana (Mouse-ear cress).